The primary structure comprises 134 residues: Protein NrdI (134 aa).

Belongs to the NrdI family.

Its function is as follows. Probably involved in ribonucleotide reductase function. The protein is Protein NrdI of Rhizobium leguminosarum bv. trifolii (strain WSM2304).